Reading from the N-terminus, the 181-residue chain is ADP-ribosylation factor 1 (181 aa).

Gly2 carries the N-myristoyl glycine lipid modification. GTP is bound by residues 24–31 (GLDAAGKT), 67–71 (DVGGQ), and 126–129 (NKQD).

The protein belongs to the small GTPase superfamily. Arf family.

The protein localises to the golgi apparatus. The enzyme catalyses GTP + H2O = GDP + phosphate + H(+). Its function is as follows. GTP-binding protein involved in protein trafficking; may modulate vesicle budding and uncoating within the Golgi apparatus. The chain is ADP-ribosylation factor 1 (ARF1) from Catharanthus roseus (Madagascar periwinkle).